The primary structure comprises 105 residues: U-scoloptoxin(05)-Sa2a (105 aa).

The first 24 residues, methionine 1–alanine 24, serve as a signal peptide directing secretion. Positions histidine 79–asparagine 105 are disordered. A compositionally biased stretch (polar residues) spans threonine 92 to asparagine 105.

Belongs to the scoloptoxin-05 family. In terms of processing, contains 4 disulfide bonds. In terms of tissue distribution, expressed by the venom gland.

The protein resides in the secreted. This is U-scoloptoxin(05)-Sa2a from Scolopendra alternans (Florida Keys giant centipede).